The primary structure comprises 389 residues: Leucine aminopeptidase 1 (389 aa).

A signal peptide spans 1–18 (MKSSVLLSLCTAALVAGA). Residues 19 to 89 (AHPLEPQVVL…INANRLIEKS (71 aa)) constitute a propeptide that is removed on maturation. 3 N-linked (GlcNAc...) asparagine glycosylation sites follow: asparagine 99, asparagine 156, and asparagine 180. Positions 188, 207, 246, and 273 each coordinate Zn(2+). A disulfide bond links cysteine 322 and cysteine 326. Histidine 355 lines the Zn(2+) pocket.

It belongs to the peptidase M28 family. M28E subfamily. As to quaternary structure, monomer. It depends on Zn(2+) as a cofactor.

It is found in the secreted. Extracellular aminopeptidase that allows assimilation of proteinaceous substrates. This Phaeosphaeria nodorum (strain SN15 / ATCC MYA-4574 / FGSC 10173) (Glume blotch fungus) protein is Leucine aminopeptidase 1 (LAP1).